The sequence spans 352 residues: Chalcone synthase C (352 aa).

Cys170 is a catalytic residue.

Belongs to the thiolase-like superfamily. Chalcone/stilbene synthases family.

The enzyme catalyses (E)-4-coumaroyl-CoA + 3 malonyl-CoA + 3 H(+) = 2',4,4',6'-tetrahydroxychalcone + 3 CO2 + 4 CoA. It participates in secondary metabolite biosynthesis; flavonoid biosynthesis. Functionally, the primary product of this enzyme is 4,2',4',6'-tetrahydroxychalcone (also termed naringenin-chalcone or chalcone) which can under specific conditions spontaneously isomerize into naringenin. The protein is Chalcone synthase C (CHSC) of Ipomoea purpurea (Common morning glory).